The primary structure comprises 151 residues: Large ribosomal subunit protein bL9 (151 aa).

It belongs to the bacterial ribosomal protein bL9 family.

Binds to the 23S rRNA. This is Large ribosomal subunit protein bL9 from Pseudothermotoga lettingae (strain ATCC BAA-301 / DSM 14385 / NBRC 107922 / TMO) (Thermotoga lettingae).